The primary structure comprises 340 residues: Heat-inducible transcription repressor HrcA (340 aa).

It belongs to the HrcA family.

Its function is as follows. Negative regulator of class I heat shock genes (grpE-dnaK-dnaJ and groELS operons). Prevents heat-shock induction of these operons. This chain is Heat-inducible transcription repressor HrcA, found in Phytoplasma australiense.